Here is a 237-residue protein sequence, read N- to C-terminus: tRNA (guanine-N(7)-)-methyltransferase (237 aa).

Asp35, Glu60, Asn87, and Asp113 together coordinate S-adenosyl-L-methionine. Residue Asp113 is part of the active site. Lys117 and Asp149 together coordinate substrate.

It belongs to the class I-like SAM-binding methyltransferase superfamily. TrmB family.

The enzyme catalyses guanosine(46) in tRNA + S-adenosyl-L-methionine = N(7)-methylguanosine(46) in tRNA + S-adenosyl-L-homocysteine. Its pathway is tRNA modification; N(7)-methylguanine-tRNA biosynthesis. Catalyzes the formation of N(7)-methylguanine at position 46 (m7G46) in tRNA. The protein is tRNA (guanine-N(7)-)-methyltransferase of Synechococcus sp. (strain WH7803).